The primary structure comprises 75 residues: MAERPLDVIHRSLDKDVLVILKKGFEFRGRLIGYDIHLNVVLADAEMVQDGEVVKKYGKIVIRGDNVLAISPTEE.

The Sm domain maps to 4–75 (RPLDVIHRSL…NVLAISPTEE (72 aa)).

The protein belongs to the snRNP Sm proteins family.

The protein is Putative snRNP Sm-like protein of Pyrococcus horikoshii (strain ATCC 700860 / DSM 12428 / JCM 9974 / NBRC 100139 / OT-3).